Consider the following 240-residue polypeptide: Ribonuclease PH (240 aa).

Phosphate-binding positions include R87 and 125–127; that span reads GTR.

The protein belongs to the RNase PH family. Homohexameric ring arranged as a trimer of dimers.

The catalysed reaction is tRNA(n+1) + phosphate = tRNA(n) + a ribonucleoside 5'-diphosphate. Phosphorolytic 3'-5' exoribonuclease that plays an important role in tRNA 3'-end maturation. Removes nucleotide residues following the 3'-CCA terminus of tRNAs; can also add nucleotides to the ends of RNA molecules by using nucleoside diphosphates as substrates, but this may not be physiologically important. Probably plays a role in initiation of 16S rRNA degradation (leading to ribosome degradation) during starvation. This is Ribonuclease PH from Pseudomonas putida (strain ATCC 47054 / DSM 6125 / CFBP 8728 / NCIMB 11950 / KT2440).